We begin with the raw amino-acid sequence, 514 residues long: Na(+)/H(+) antiporter NhaB (514 aa).

12 consecutive transmembrane segments (helical) span residues 23–43, 63–83, 97–117, 120–140, 144–164, 202–222, 238–258, 303–323, 357–377, 391–411, 447–467, and 475–495; these read LALLVFLIVNPFIFLANPFIA, PLLPGGLLAIEAVIIGMTSAA, LLLMFMVAGIYFMKQLLLFIF, LLLSIRSKMVLSLAFCVAAAF, FLDALTVVAVVISVAVGFYGI, LMMHAGVGTALGGVMTMVGEP, FFLRMSPVTVPVLVCGLLTCM, AIIGVWLVTALALHLAEVGLI, LTVFFSIVAVIIDQHLFAPII, LFYLFNGLLSSISDNVFVGTI, ATPNGQAAFLFLLTSALAPLI, and VWMALPYTIVLTLIGLLCVEF.

This sequence belongs to the NhaB Na(+)/H(+) (TC 2.A.34) antiporter family.

The protein localises to the cell inner membrane. The catalysed reaction is 2 Na(+)(in) + 3 H(+)(out) = 2 Na(+)(out) + 3 H(+)(in). In terms of biological role, na(+)/H(+) antiporter that extrudes sodium in exchange for external protons. This chain is Na(+)/H(+) antiporter NhaB, found in Salmonella heidelberg (strain SL476).